The following is a 31-amino-acid chain: Cytochrome b6-f complex subunit 6 (31 aa).

The chain crosses the membrane as a helical span at residues 3 to 23 (LFIGYIIFLVAFFGLATGLFL).

The protein belongs to the PetL family. As to quaternary structure, the 4 large subunits of the cytochrome b6-f complex are cytochrome b6, subunit IV (17 kDa polypeptide, PetD), cytochrome f and the Rieske protein, while the 4 small subunits are PetG, PetL, PetM and PetN. The complex functions as a dimer.

It is found in the plastid. Its subcellular location is the chloroplast thylakoid membrane. Its function is as follows. Component of the cytochrome b6-f complex, which mediates electron transfer between photosystem II (PSII) and photosystem I (PSI), cyclic electron flow around PSI, and state transitions. PetL is important for photoautotrophic growth as well as for electron transfer efficiency and stability of the cytochrome b6-f complex. This is Cytochrome b6-f complex subunit 6 from Porphyra purpurea (Red seaweed).